An 872-amino-acid chain; its full sequence is Dynein regulatory complex subunit 7 (872 aa).

Disordered stretches follow at residues 1 to 40 (MEVLKEKVEEEEAAEREEAAERAERGEKTKRPMEVRREET), 231 to 281 (ESVK…QEEA), and 385 to 410 (EEEDEGMNDDDDVENLGKEDEDKSFD). The stretch at 1 to 64 (MEVLKEKVEE…SEIEVSVPEK (64 aa)) forms a coiled coil. 3 stretches are compositionally biased toward basic and acidic residues: residues 16–40 (REEAAERAERGEKTKRPMEVRREET), 231–240 (ESVKEEEKAP), and 248–281 (PPRDLTSRFEQEQEMKRQEAIKAEEENRRKQEEA). A coiled-coil region spans residues 254-292 (SRFEQEQEMKRQEAIKAEEENRRKQEEARLLEQENAKTD). Residues 385 to 398 (EEEDEGMNDDDDVE) show a composition bias toward acidic residues. Over residues 399 to 409 (NLGKEDEDKSF) the composition is skewed to basic and acidic residues. Coiled-coil stretches lie at residues 676-706 (LKNEEKLSRHQAWESELEVLEILKLREEEEE) and 780-805 (QRLIDKANLIQARFEKETQELQKKQQ).

It belongs to the DRC7 family. In terms of assembly, component of the nexin-dynein regulatory complex (N-DRC). Interacts with TCTE1/DRC5. Interacts with DRC3 and GAS8/DRC4.

The protein resides in the cell projection. It localises to the cilium. Its subcellular location is the flagellum. It is found in the cytoplasm. The protein localises to the cytoskeleton. The protein resides in the cilium axoneme. It localises to the flagellum axoneme. In terms of biological role, component of the nexin-dynein regulatory complex (N-DRC) a key regulator of ciliary/flagellar motility which maintains the alignment and integrity of the distal axoneme and regulates microtubule sliding in motile axonemes. Involved in the regulation of flagellar motility. Essential for male fertility, sperm head morphogenesis and sperm flagellum formation. The polypeptide is Dynein regulatory complex subunit 7 (DRC7) (Bos taurus (Bovine)).